A 293-amino-acid polypeptide reads, in one-letter code: Small ribosomal subunit biogenesis GTPase RsgA (293 aa).

A CP-type G domain is found at K63–L223. GTP-binding positions include S112–D115 and G166–S174. Zn(2+) contacts are provided by C247, C252, H254, and C260.

This sequence belongs to the TRAFAC class YlqF/YawG GTPase family. RsgA subfamily. In terms of assembly, monomer. Associates with 30S ribosomal subunit, binds 16S rRNA. The cofactor is Zn(2+).

It is found in the cytoplasm. In terms of biological role, one of several proteins that assist in the late maturation steps of the functional core of the 30S ribosomal subunit. Helps release RbfA from mature subunits. May play a role in the assembly of ribosomal proteins into the subunit. Circularly permuted GTPase that catalyzes slow GTP hydrolysis, GTPase activity is stimulated by the 30S ribosomal subunit. In Bacillus cereus (strain ATCC 10987 / NRS 248), this protein is Small ribosomal subunit biogenesis GTPase RsgA.